The primary structure comprises 358 residues: 3-isopropylmalate dehydrogenase (358 aa).

NAD(+) is bound at residue 77 to 90; the sequence is GEKWDSLPRELRPE. Residues R97, R107, R135, and D220 each contribute to the substrate site. Residues D220, D244, and D248 each contribute to the Mg(2+) site. 277-289 lines the NAD(+) pocket; it reads GSAPDIAGQGIAN.

Belongs to the isocitrate and isopropylmalate dehydrogenases family. LeuB type 1 subfamily. Homodimer. Requires Mg(2+) as cofactor. It depends on Mn(2+) as a cofactor.

It is found in the cytoplasm. It catalyses the reaction (2R,3S)-3-isopropylmalate + NAD(+) = 4-methyl-2-oxopentanoate + CO2 + NADH. The protein operates within amino-acid biosynthesis; L-leucine biosynthesis; L-leucine from 3-methyl-2-oxobutanoate: step 3/4. Functionally, catalyzes the oxidation of 3-carboxy-2-hydroxy-4-methylpentanoate (3-isopropylmalate) to 3-carboxy-4-methyl-2-oxopentanoate. The product decarboxylates to 4-methyl-2 oxopentanoate. In Wolinella succinogenes (strain ATCC 29543 / DSM 1740 / CCUG 13145 / JCM 31913 / LMG 7466 / NCTC 11488 / FDC 602W) (Vibrio succinogenes), this protein is 3-isopropylmalate dehydrogenase.